The chain runs to 277 residues: MTKARIDARFAELAREGRAAFVPYVMAGDPDRETALAILKGLPAAGADIIELGFPFSDPMAEGPPIQRAAGRALAKGMTLQGVLDLVRAFRAGDATTPLILMGYMNPLVTWGLEAFARDASDAGVDGLIIVDCPPEEADPLADALDAAGVSLIRLATPTTGDARLKVVVRRTSGFVYYVSVAGVTGVKEADAAAVAPNVERVRKASGLPVAVGFGIKTPERAAQVAQVADAVVVGSALVDEVAEAVDMNEDVTARVLSKVESLAKAVRLARRSHEAV.

Residues Glu-51 and Glu-62 each act as proton acceptor in the active site.

This sequence belongs to the TrpA family. Tetramer of two alpha and two beta chains.

The catalysed reaction is (1S,2R)-1-C-(indol-3-yl)glycerol 3-phosphate + L-serine = D-glyceraldehyde 3-phosphate + L-tryptophan + H2O. Its pathway is amino-acid biosynthesis; L-tryptophan biosynthesis; L-tryptophan from chorismate: step 5/5. Functionally, the alpha subunit is responsible for the aldol cleavage of indoleglycerol phosphate to indole and glyceraldehyde 3-phosphate. The protein is Tryptophan synthase alpha chain of Phenylobacterium zucineum (strain HLK1).